The following is a 317-amino-acid chain: Ribose-phosphate pyrophosphokinase (317 aa).

ATP is bound by residues 43-45 (DGE) and 102-103 (RQ). The Mg(2+) site is built by His-136 and Asp-175. Residue Lys-198 is part of the active site. D-ribose 5-phosphate contacts are provided by residues Arg-200, Asp-224, and 228 to 232 (DTAGT).

Belongs to the ribose-phosphate pyrophosphokinase family. Class I subfamily. As to quaternary structure, homohexamer. It depends on Mg(2+) as a cofactor.

The protein localises to the cytoplasm. It catalyses the reaction D-ribose 5-phosphate + ATP = 5-phospho-alpha-D-ribose 1-diphosphate + AMP + H(+). It functions in the pathway metabolic intermediate biosynthesis; 5-phospho-alpha-D-ribose 1-diphosphate biosynthesis; 5-phospho-alpha-D-ribose 1-diphosphate from D-ribose 5-phosphate (route I): step 1/1. Involved in the biosynthesis of the central metabolite phospho-alpha-D-ribosyl-1-pyrophosphate (PRPP) via the transfer of pyrophosphoryl group from ATP to 1-hydroxyl of ribose-5-phosphate (Rib-5-P). In Bacillus anthracis, this protein is Ribose-phosphate pyrophosphokinase.